A 113-amino-acid chain; its full sequence is Hydrogenase maturation factor HypA (113 aa).

Histidine 2 is a Ni(2+) binding site. Residues cysteine 73, cysteine 76, cysteine 89, and cysteine 92 each coordinate Zn(2+).

Belongs to the HypA/HybF family.

Involved in the maturation of [NiFe] hydrogenases. Required for nickel insertion into the metal center of the hydrogenase. The sequence is that of Hydrogenase maturation factor HypA from Albidiferax ferrireducens (strain ATCC BAA-621 / DSM 15236 / T118) (Rhodoferax ferrireducens).